Consider the following 247-residue polypeptide: MQTQVLFEHPLNEKMRTWLRIEFLIQQLTVNLPIVDHAGALHFFRNVSELLDVFERGEVRTELLKELDRQQRKLQTWIGVPGVDQSRIEALIQQLKAAGSVLISAPRIGQFLREDRLIALVRQRLSIPGGCCSFDLPTLHIWLHLPQAQRDSQVETWIASLNPLTQALTMVLDLIRQSAPFRKQTSLNGFYQDNGGDADLLRLNLSLDSQLYPQISGHKSRFAIRFMPLDSENGQVPERLDFELACC.

Belongs to the ZapD family. Interacts with FtsZ.

It localises to the cytoplasm. Its function is as follows. Cell division factor that enhances FtsZ-ring assembly. Directly interacts with FtsZ and promotes bundling of FtsZ protofilaments, with a reduction in FtsZ GTPase activity. In Shigella boydii serotype 18 (strain CDC 3083-94 / BS512), this protein is Cell division protein ZapD.